A 672-amino-acid chain; its full sequence is Iron-phytosiderophore transporter YSL15 (672 aa).

Basic and acidic residues predominate over residues 1–11; the sequence is MEHADADRTRV. The disordered stretch occupies residues 1 to 27; the sequence is MEHADADRTRVAPEIGSLHDEDAEADP. 14 helical membrane-spanning segments follow: residues 47-67, 70-90, 115-135, 158-178, 218-238, 279-299, 325-345, 390-410, 418-438, 450-470, 504-524, 556-576, 602-622, and 630-650; these read GVVA…KIAL, GLVP…LRGW, CAVA…LLGL, GIGW…LSLI, LHGF…QWFY, LVNL…WPLI, FLCI…VTGV, MAYS…PIMF, VIIA…GAGL, IALF…AGLV, VGEL…FMLF, ISAL…FAVL, FLVG…LFAW, and AAFM…IWTF.

It belongs to the YSL (TC 2.A.67.2) family. Expressed in root phloem and at low levels in the shoot companion cells.

The protein resides in the cell membrane. Its function is as follows. Involved in Fe(3+) uptake from the rhizosphere and phloem transport of iron. Plays an important role in iron homeostasis during the early stages of growth. Transports Fe(3+)-phytosiderophore, but not Fe(3+)- or Fe(2+)-nicotianamine. May not transport other chelated metals. This Oryza sativa subsp. japonica (Rice) protein is Iron-phytosiderophore transporter YSL15 (YSL15).